A 1769-amino-acid chain; its full sequence is Gamma-tubulin complex component 6 (1769 aa).

Disordered stretches follow at residues 809 to 842 (EAQQPQEPPSVFPSTGSQVTSTGPEHAGEGHSCD), 859 to 881 (STPSVPKSATEGADDSGAGPFST), and 1284 to 1360 (TVCS…AEAR). Residues 820-831 (FPSTGSQVTSTG) are compositionally biased toward polar residues. Residues 1314 to 1326 (PEEKGPGKSRDAE) show a composition bias toward basic and acidic residues. A compositionally biased stretch (polar residues) spans 1332-1343 (LPSSSQEDTAVP).

This sequence belongs to the TUBGCP family. As to quaternary structure, component of the gamma-tubulin ring complex (gTuRC) consisting of TUBGCP2, TUBGCP3, TUBGCP4, TUBGCP5 and TUBGCP6 and gamma-tubulin TUBG1 or TUBG2. TUBGCP2, TUBGCP3, TUBGCP4, TUBGCP5 and TUBGCP6 assemble in a 5:5:2:1:1 stoichiometry; each is associated with a gamma-tubulin, thereby arranging 14 gamma-tubulins in a helical manner. Gamma-tubulin at the first position is blocked by TUBGCP3 at the last position, allowing 13 protafilaments to grow into a microtubule. The gTuRC (via TUBGCP3 and TUBGCP6) interacts with ACTB and MZT1; the interactions form a luminal bridge that stabilizes the initial structure during complex assembly. The gTuRC (via TUBGCP2) interacts with MZT2A/MZT2B and CDK5RAP2 (via CM1 motif); the interactions play a role in gTuRC activation.

Its subcellular location is the cytoplasm. The protein localises to the cytoskeleton. It is found in the microtubule organizing center. The protein resides in the centrosome. Its function is as follows. Component of the gamma-tubulin ring complex (gTuRC) which mediates microtubule nucleation. The gTuRC regulates the minus-end nucleation of alpha-beta tubulin heterodimers that grow into microtubule protafilaments, a critical step in centrosome duplication and spindle formation. The protein is Gamma-tubulin complex component 6 (Tubgcp6) of Mus musculus (Mouse).